We begin with the raw amino-acid sequence, 345 residues long: Adenylosuccinate synthetase (345 aa).

Residues Gly-18–Lys-24 and Gly-48–Thr-50 each bind GTP. The active-site Proton acceptor is Asp-19. Asp-19 and Gly-48 together coordinate Mg(2+). IMP-binding positions include Asp-19–Lys-22, Asn-46–His-49, Thr-133, Arg-147, Gln-185, Thr-200, and Arg-262. Residue His-49 is the Proton donor of the active site. Thr-258 to Arg-264 contacts substrate. GTP is bound by residues Arg-264, Gly-290–Asp-292, and Ser-330–Gly-332.

Belongs to the adenylosuccinate synthetase family. Homodimer. The cofactor is Mg(2+).

The protein localises to the cytoplasm. It catalyses the reaction IMP + L-aspartate + GTP = N(6)-(1,2-dicarboxyethyl)-AMP + GDP + phosphate + 2 H(+). The protein operates within purine metabolism; AMP biosynthesis via de novo pathway; AMP from IMP: step 1/2. Plays an important role in the de novo pathway of purine nucleotide biosynthesis. Catalyzes the first committed step in the biosynthesis of AMP from IMP. The polypeptide is Adenylosuccinate synthetase (Methanocaldococcus jannaschii (strain ATCC 43067 / DSM 2661 / JAL-1 / JCM 10045 / NBRC 100440) (Methanococcus jannaschii)).